A 434-amino-acid chain; its full sequence is Enolase (434 aa).

A (2R)-2-phosphoglycerate-binding site is contributed by Gln-165. Residue Glu-207 is the Proton donor of the active site. Asp-244, Glu-291, and Asp-318 together coordinate Mg(2+). Lys-343, Arg-372, Ser-373, and Lys-394 together coordinate (2R)-2-phosphoglycerate. Lys-343 functions as the Proton acceptor in the catalytic mechanism.

This sequence belongs to the enolase family. Requires Mg(2+) as cofactor.

The protein localises to the cytoplasm. It localises to the secreted. Its subcellular location is the cell surface. The catalysed reaction is (2R)-2-phosphoglycerate = phosphoenolpyruvate + H2O. The protein operates within carbohydrate degradation; glycolysis; pyruvate from D-glyceraldehyde 3-phosphate: step 4/5. In terms of biological role, catalyzes the reversible conversion of 2-phosphoglycerate (2-PG) into phosphoenolpyruvate (PEP). It is essential for the degradation of carbohydrates via glycolysis. This is Enolase from Macrococcus caseolyticus (strain JCSC5402) (Macrococcoides caseolyticum).